Here is a 295-residue protein sequence, read N- to C-terminus: 4-diphosphocytidyl-2-C-methyl-D-erythritol kinase (295 aa).

Residue lysine 18 is part of the active site. Residue 101–111 participates in ATP binding; it reads PMGGGIGGGSS. The active site involves aspartate 143.

This sequence belongs to the GHMP kinase family. IspE subfamily.

It catalyses the reaction 4-CDP-2-C-methyl-D-erythritol + ATP = 4-CDP-2-C-methyl-D-erythritol 2-phosphate + ADP + H(+). Its pathway is isoprenoid biosynthesis; isopentenyl diphosphate biosynthesis via DXP pathway; isopentenyl diphosphate from 1-deoxy-D-xylulose 5-phosphate: step 3/6. Functionally, catalyzes the phosphorylation of the position 2 hydroxy group of 4-diphosphocytidyl-2C-methyl-D-erythritol. The protein is 4-diphosphocytidyl-2-C-methyl-D-erythritol kinase of Vibrio cholerae serotype O1 (strain ATCC 39315 / El Tor Inaba N16961).